The chain runs to 317 residues: Beta-ketoacyl-[acyl-carrier-protein] synthase III (317 aa).

Catalysis depends on residues C112 and H244. An ACP-binding region spans residues 245–249; that stretch reads QANLR. The active site involves N274.

The protein belongs to the thiolase-like superfamily. FabH family. In terms of assembly, homodimer.

The protein resides in the cytoplasm. The enzyme catalyses malonyl-[ACP] + acetyl-CoA + H(+) = 3-oxobutanoyl-[ACP] + CO2 + CoA. It functions in the pathway lipid metabolism; fatty acid biosynthesis. Its function is as follows. Catalyzes the condensation reaction of fatty acid synthesis by the addition to an acyl acceptor of two carbons from malonyl-ACP. Catalyzes the first condensation reaction which initiates fatty acid synthesis and may therefore play a role in governing the total rate of fatty acid production. Possesses both acetoacetyl-ACP synthase and acetyl transacylase activities. Its substrate specificity determines the biosynthesis of branched-chain and/or straight-chain of fatty acids. The protein is Beta-ketoacyl-[acyl-carrier-protein] synthase III of Salmonella typhi.